We begin with the raw amino-acid sequence, 88 residues long: Small ribosomal subunit protein bS16c (88 aa).

In terms of assembly, component of the chloroplast small ribosomal subunit (SSU). Mature 70S chloroplast ribosomes of higher plants consist of a small (30S) and a large (50S) subunit. The 30S small subunit contains 1 molecule of ribosomal RNA (16S rRNA) and 24 different proteins. The 50S large subunit contains 3 rRNA molecules (23S, 5S and 4.5S rRNA) and 33 different proteins.

It is found in the plastid. The protein resides in the chloroplast. Functionally, component of the chloroplast ribosome (chloro-ribosome), a dedicated translation machinery responsible for the synthesis of chloroplast genome-encoded proteins, including proteins of the transcription and translation machinery and components of the photosynthetic apparatus. The protein is Small ribosomal subunit protein bS16c of Spinacia oleracea (Spinach).